The chain runs to 256 residues: MEGITHPIPRTVEEVFSDFRGRRAGLIKALTNDMVKFYQTCDPEKENLCLYGLPNETWEVNLPVEEVPPELPEPALGINFARDGMQEKDWVSLVAVHSDSWLLSVAFYFGARFGFGKNERKRLFQMINELPTIFEVVSGNAKQSKDLSVNNNNSKSKPSGVKSRQSESLSKVAKMSSPPPKEEEEEEDESEDESEDDEQGAVCGACGDNYGTDEFWICCDACEKWFHGKCVKITPAKAEHIKHYKCPTCSNKRARP.

The interval 144 to 200 is disordered; it reads SKDLSVNNNNSKSKPSGVKSRQSESLSKVAKMSSPPPKEEEEEEDESEDESEDDEQG. A compositionally biased stretch (low complexity) spans 146-163; it reads DLSVNNNNSKSKPSGVKS. Residues 182–199 show a composition bias toward acidic residues; that stretch reads EEEEEEDESEDESEDDEQ. The segment at 200 to 252 adopts a PHD-type zinc-finger fold; that stretch reads GAVCGACGDNYGTDEFWICCDACEKWFHGKCVKITPAKAEHIKHYKCPTCSNK.

This sequence belongs to the Alfin family. In terms of assembly, interacts with H3K4me3 and to a lesser extent with H3K4me2. Ubiquitously expressed.

The protein localises to the nucleus. In terms of biological role, histone-binding component that specifically recognizes H3 tails trimethylated on 'Lys-4' (H3K4me3), which mark transcription start sites of virtually all active genes. This Arabidopsis thaliana (Mouse-ear cress) protein is PHD finger protein ALFIN-LIKE 6 (AL6).